We begin with the raw amino-acid sequence, 396 residues long: THAP domain-containing protein 5 (396 aa).

The THAP-type zinc-finger motif lies at 2–85 (MPRYCAAICC…LKQTAVPTIF (84 aa)). Positions 86–113 (SLPEDNQGKDPSKKKSQKKNLEDEKEVC) are disordered. Residues 91–113 (NQGKDPSKKKSQKKNLEDEKEVC) are compositionally biased toward basic and acidic residues. The short motif at 322-325 (EHSY) is the HCFC1-binding motif (HBM) element. A coiled-coil region spans residues 349 to 382 (LELKEQQTLGRLKSLEALVRQLKQENWLSEENVK).

As to quaternary structure, interacts with HTRA2; under apoptotic conditions. Interacts with ABRAXAS2. In terms of processing, cleaved by HTRA2 during apoptosis.

It is found in the nucleus. Has sequence-specific DNA-binding activity and can function as transcriptional repressor (in vitro). May be a regulator of cell cycle: THAP5 overexpression in human cell lines causes cell cycle arrest at G2/M phase. The protein is THAP domain-containing protein 5 (THAP5) of Macaca fascicularis (Crab-eating macaque).